A 754-amino-acid chain; its full sequence is Lysophospholipase 3 (754 aa).

An N-terminal signal peptide occupies residues 1–19 (MKVNLKLIIGSILISQAQA). Composition is skewed to low complexity over residues 25 to 40 (SSGS…SETG) and 50 to 88 (LFGS…SSNS). A disordered region spans residues 25–88 (SSGSSSSSDS…DSSLFSSSNS (64 aa)). Asn-112, Asn-156, Asn-174, Asn-317, Asn-325, Asn-354, Asn-391, Asn-423, Asn-470, Asn-510, Asn-515, Asn-560, Asn-577, Asn-597, Asn-625, and Asn-631 each carry an N-linked (GlcNAc...) asparagine glycan. Residues 114–670 (TCPSKKTFIR…QEYCWTGGFK (557 aa)) form the PLA2c domain. The span at 687–721 (KTHTSGGTSSTTQQTSTTTGSSANGGSSSTGSSSS) shows a compositional bias: low complexity. A disordered region spans residues 687–727 (KTHTSGGTSSTTQQTSTTTGSSANGGSSSTGSSSSSKKKNG).

This sequence belongs to the lysophospholipase family.

Its subcellular location is the secreted. It catalyses the reaction a 1-acyl-sn-glycero-3-phosphocholine + H2O = sn-glycerol 3-phosphocholine + a fatty acid + H(+). Its function is as follows. Catalyzes the release of fatty acids from lysophospholipids. Phospholipase B may well contribute to pathogenicity by abetting the fungus in damaging and traversing host cell membranes, processes which likely increase the rapidity of disseminated infection. This chain is Lysophospholipase 3 (PLB3), found in Candida albicans (Yeast).